Reading from the N-terminus, the 493-residue chain is Probable cytosol aminopeptidase (493 aa).

2 residues coordinate Mn(2+): Lys262 and Asp267. Lys274 is an active-site residue. 3 residues coordinate Mn(2+): Asp285, Asp344, and Glu346. Arg348 is a catalytic residue.

Belongs to the peptidase M17 family. It depends on Mn(2+) as a cofactor.

The protein resides in the cytoplasm. It carries out the reaction Release of an N-terminal amino acid, Xaa-|-Yaa-, in which Xaa is preferably Leu, but may be other amino acids including Pro although not Arg or Lys, and Yaa may be Pro. Amino acid amides and methyl esters are also readily hydrolyzed, but rates on arylamides are exceedingly low.. The catalysed reaction is Release of an N-terminal amino acid, preferentially leucine, but not glutamic or aspartic acids.. Its function is as follows. Presumably involved in the processing and regular turnover of intracellular proteins. Catalyzes the removal of unsubstituted N-terminal amino acids from various peptides. The protein is Probable cytosol aminopeptidase of Xanthomonas campestris pv. campestris (strain 8004).